Reading from the N-terminus, the 631-residue chain is Glycosyltransferase-like protein LARGE (631 aa).

The Cytoplasmic portion of the chain corresponds to 1–6 (MQSNYS). The chain crosses the membrane as a helical; Signal-anchor for type II membrane protein span at residues 7-27 (ISYFLLILFTGTSSYFTIWNF). Residues 28–631 (VDHTRVGAFP…TASRLGIKLR (604 aa)) lie on the Lumenal side of the membrane. Asparagine 95, asparagine 105, asparagine 167, asparagine 177, asparagine 287, asparagine 400, asparagine 485, asparagine 502, asparagine 521, asparagine 529, and asparagine 593 each carry an N-linked (GlcNAc...) asparagine glycan.

This sequence belongs to the glycosyltransferase 8 family.

The protein localises to the golgi apparatus membrane. Probable glycosyltransferase. The chain is Glycosyltransferase-like protein LARGE (lge-1) from Caenorhabditis elegans.